The sequence spans 473 residues: Cysteine--tRNA ligase (473 aa).

Cys-28 serves as a coordination point for Zn(2+). The 'HIGH' region signature appears at 30-40 (MTVYDFCHIGH). Cys-212, His-237, and Glu-241 together coordinate Zn(2+). Positions 277 to 281 (KMSKS) match the 'KMSKS' region motif. Lys-280 contacts ATP.

The protein belongs to the class-I aminoacyl-tRNA synthetase family. In terms of assembly, monomer. Zn(2+) serves as cofactor.

The protein localises to the cytoplasm. The enzyme catalyses tRNA(Cys) + L-cysteine + ATP = L-cysteinyl-tRNA(Cys) + AMP + diphosphate. The chain is Cysteine--tRNA ligase from Polynucleobacter asymbioticus (strain DSM 18221 / CIP 109841 / QLW-P1DMWA-1) (Polynucleobacter necessarius subsp. asymbioticus).